Here is a 306-residue protein sequence, read N- to C-terminus: MGCDGGTIPKRHELVKGPKKVEKVDKDAELVAQWNYCTLSQEVLRRPIVACELGRLYNKDAVIEFLLDKSAEKALGKATSHIRSIKNVTELKLSDNPAWEGDKGNTKGDKHDDLQRARFICPVVGLEMNGRHRFCFLRCCGCVFSERALKEIKAEVCHTCGAAFQEEDIIVLNGTKEDVEMLKRRMEERRLRAKLEKKTKKPKTAESASKLGISQDSAGPSKAKAGKSEEADPDPREKKSSLAPRGTASNGSASGKVGKPPCGALKRSIADSEESETYKSIFTSHSSAKRSKEESAHWVTHTSYCF.

The interval 192–306 is disordered; sequence RAKLEKKTKK…HWVTHTSYCF (115 aa). Residues 226-240 are compositionally biased toward basic and acidic residues; that stretch reads GKSEEADPDPREKKS. Position 287 is a phosphoserine (Ser-287).

It belongs to the rtf2 family. As to quaternary structure, interacts with DDI2; probably also interacts with DDI1. In terms of processing, undergoes proteasomal degradation, via DDI1 and DDI2. Removal from stalled replisomes and degradation are required for genome stability.

The protein localises to the chromosome. Functionally, replication termination factor which is a component of the elongating replisome. Required for ATR pathway signaling upon DNA damage and has a positive activity during DNA replication. Might function to facilitate fork pausing at replication fork barriers like the rDNA. May be globally required to stimulate ATR signaling after the fork stalls or encounters a lesion. Interacts with nascent DNA. The protein is Replication termination factor 2 of Rattus norvegicus (Rat).